The following is a 131-amino-acid chain: Transcription antitermination protein NusB (131 aa).

Belongs to the NusB family.

Functionally, involved in transcription antitermination. Required for transcription of ribosomal RNA (rRNA) genes. Binds specifically to the boxA antiterminator sequence of the ribosomal RNA (rrn) operons. This chain is Transcription antitermination protein NusB, found in Agathobacter rectalis (strain ATCC 33656 / DSM 3377 / JCM 17463 / KCTC 5835 / VPI 0990) (Eubacterium rectale).